Reading from the N-terminus, the 232-residue chain is Large ribosomal subunit protein uL1 (232 aa).

It belongs to the universal ribosomal protein uL1 family. In terms of assembly, part of the 50S ribosomal subunit.

Its function is as follows. Binds directly to 23S rRNA. The L1 stalk is quite mobile in the ribosome, and is involved in E site tRNA release. Functionally, protein L1 is also a translational repressor protein, it controls the translation of the L11 operon by binding to its mRNA. This Amoebophilus asiaticus (strain 5a2) protein is Large ribosomal subunit protein uL1.